Reading from the N-terminus, the 199-residue chain is Small ribosomal subunit protein uS5 (199 aa).

The segment at 1 to 28 (MARTPNTDRRQRGGDDQRNRSPRSDERD) is disordered. Positions 31–94 (FLDKLVHINR…DQAKRTMIKV (64 aa)) constitute an S5 DRBM domain.

This sequence belongs to the universal ribosomal protein uS5 family. In terms of assembly, part of the 30S ribosomal subunit. Contacts proteins S4 and S8.

Its function is as follows. With S4 and S12 plays an important role in translational accuracy. Functionally, located at the back of the 30S subunit body where it stabilizes the conformation of the head with respect to the body. In Rhodospirillum rubrum (strain ATCC 11170 / ATH 1.1.1 / DSM 467 / LMG 4362 / NCIMB 8255 / S1), this protein is Small ribosomal subunit protein uS5.